A 488-amino-acid polypeptide reads, in one-letter code: Acetyl-coenzyme A carboxylase carboxyl transferase subunit beta, chloroplastic (488 aa).

The 265-residue stretch at 224–488 folds into the CoA carboxyltransferase N-terminal domain; it reads LWIQCDNCYG…FFPLNKNEIK (265 aa). The Zn(2+) site is built by cysteine 228, cysteine 231, cysteine 244, and cysteine 247. Residues 228 to 247 form a C4-type zinc finger; that stretch reads CDNCYGLMYKKVEMNVCEEC.

Belongs to the AccD/PCCB family. As to quaternary structure, acetyl-CoA carboxylase is a heterohexamer composed of biotin carboxyl carrier protein, biotin carboxylase and 2 subunits each of ACCase subunit alpha and ACCase plastid-coded subunit beta (accD). Requires Zn(2+) as cofactor.

The protein resides in the plastid. It localises to the chloroplast stroma. The enzyme catalyses N(6)-carboxybiotinyl-L-lysyl-[protein] + acetyl-CoA = N(6)-biotinyl-L-lysyl-[protein] + malonyl-CoA. It functions in the pathway lipid metabolism; malonyl-CoA biosynthesis; malonyl-CoA from acetyl-CoA: step 1/1. Component of the acetyl coenzyme A carboxylase (ACC) complex. Biotin carboxylase (BC) catalyzes the carboxylation of biotin on its carrier protein (BCCP) and then the CO(2) group is transferred by the transcarboxylase to acetyl-CoA to form malonyl-CoA. The polypeptide is Acetyl-coenzyme A carboxylase carboxyl transferase subunit beta, chloroplastic (Arabis hirsuta (Hairy rock-cress)).